We begin with the raw amino-acid sequence, 88 residues long: Large ribosomal subunit protein bL27 (88 aa).

Residues 1–21 (MAHKKGVGSSRNGRDSQPKML) are disordered.

The protein belongs to the bacterial ribosomal protein bL27 family.

The chain is Large ribosomal subunit protein bL27 from Pelotomaculum thermopropionicum (strain DSM 13744 / JCM 10971 / SI).